The chain runs to 343 residues: Transmembrane protein 120A (343 aa).

Residues 1 to 132 (MHPPPPGPLG…KQAKFAYKDE (132 aa)) lie on the Cytoplasmic side of the membrane. Lys130 contacts CoA. A helical membrane pass occupies residues 133 to 152 (YEKFKLYLTIILILISFTCR). Over 153–158 (FLLNSR) the chain is Extracellular. The helical transmembrane segment at 159 to 177 (VTDAAFNFLLVWYYCTLTI) threads the bilayer. Residues 178 to 190 (RESILINNGSRIK) lie on the Cytoplasmic side of the membrane. CoA is bound by residues Ser187 and Arg188. A helical membrane pass occupies residues 191-209 (GWWVFHHYVSTFLSGVMLT). Residues 210-218 (WPDGLMYQK) are Extracellular-facing. A helical membrane pass occupies residues 219-240 (FRNQFLSFSMYQSFVQFLQYYY). Residues Gln237, Tyr240, Gln241, and His283 each coordinate CoA. At 241-270 (QSGCLYRLRALGERHTMDLTVEGFQSWMWR) the chain is on the cytoplasmic side. Residues 271 to 294 (GLTFLLPFLFFGHFWQLFNALTLF) traverse the membrane as a helical segment. Residues 295–304 (NLARDPECKE) lie on the Extracellular side of the membrane. Residues 305–330 (WQVLMCGFPFLLLFLGNFFTTLRVVH) form a helical membrane-spanning segment. Residues 331-343 (QKFHNQLHGSKKE) are Cytoplasmic-facing. CoA is bound at residue Lys332.

Belongs to the TMEM120 family. As to quaternary structure, homodimer. Forms heterooligomer with TMEM120B. Interacts with PKD2; TMEM120A inhibits PKD2 channel activity through the physical association of PKD2 with TMEM120A.

The protein localises to the cell membrane. Its subcellular location is the nucleus inner membrane. The protein resides in the endoplasmic reticulum. In terms of biological role, multifunctional protein involved in mechanosensation, and plays an essential role in lipid metabolism and adipocyte differentiation. May function as an ion channel involved in sensing mechanical stimuli. Mediates the mechanosensitivity of the PKD2-TMEM120A channel complex through direct physical interaction. TMEM120A seems to affect mechanosensation by inhibiting PIEZO2 channels, possibly by altering cellular lipid content. TMEM120A is structurally similar to a lipid-modifying enzyme, ELOVL7, and contains a bound coenzyme A molecule, which suggests it might function as an enzyme in lipid metabolism. Additionnaly, implicated in innate immune response against Zika virus. Acts as a key activator of the antiviral signaling involving STING1. The protein is Transmembrane protein 120A of Bos taurus (Bovine).